We begin with the raw amino-acid sequence, 680 residues long: DNA-directed RNA polymerase subunit beta' (680 aa).

4 residues coordinate Zn(2+): Cys69, Cys71, Cys87, and Cys90. Residues Asp489, Asp491, and Asp493 each coordinate Mg(2+).

The protein belongs to the RNA polymerase beta' chain family. RpoC1 subfamily. In plastids the minimal PEP RNA polymerase catalytic core is composed of four subunits: alpha, beta, beta', and beta''. When a (nuclear-encoded) sigma factor is associated with the core the holoenzyme is formed, which can initiate transcription. Requires Mg(2+) as cofactor. The cofactor is Zn(2+).

It localises to the plastid. The protein resides in the chloroplast. The catalysed reaction is RNA(n) + a ribonucleoside 5'-triphosphate = RNA(n+1) + diphosphate. Its function is as follows. DNA-dependent RNA polymerase catalyzes the transcription of DNA into RNA using the four ribonucleoside triphosphates as substrates. The polypeptide is DNA-directed RNA polymerase subunit beta' (Citrus sinensis (Sweet orange)).